The following is a 112-amino-acid chain: Large ribosomal subunit protein bL20c (112 aa).

It belongs to the bacterial ribosomal protein bL20 family.

It is found in the plastid. The protein resides in the chloroplast. In terms of biological role, binds directly to 23S ribosomal RNA and is necessary for the in vitro assembly process of the 50S ribosomal subunit. It is not involved in the protein synthesizing functions of that subunit. This chain is Large ribosomal subunit protein bL20c (rpl20), found in Chlamydomonas reinhardtii (Chlamydomonas smithii).